A 634-amino-acid chain; its full sequence is Dachshund homolog 2 (634 aa).

Residues 76–162 (RMVDMHGVKV…LITRKDFETL (87 aa)) form a DACHbox-N region. 3 disordered regions span residues 171-194 (RKRQ…KRSL), 244-286 (LQGN…SGPQ), and 378-416 (IPES…MDHH). Polar residues predominate over residues 244–269 (LQGNGSQNGTESEPDDLNSTTGGSES). Over residues 396–412 (SQTSSHPSSSVSSSPSQ) the composition is skewed to low complexity. The DACHbox-C stretch occupies residues 488 to 568 (SSVETLLTNI…KAKRKLQEAL (81 aa)). A coiled-coil region spans residues 494-588 (LTNIQGLLKV…EQALKQATSG (95 aa)).

The protein belongs to the DACH/dachshund family. In terms of assembly, interacts with SIX6. Interacts with EYA2. Expressed in embryo, and at lower levels in the newborn.

It localises to the nucleus. Transcription factor that is involved in regulation of organogenesis. Seems to be a regulator for SIX1 and SIX6. Seems to act as a corepressor of SIX6 in regulating proliferation by directly repressing cyclin-dependent kinase inhibitors, including the p27Kip1 promoter. Is recruited with SIX6 to the p27Kip1 promoter in embryonal retina. SIX6 corepression also seems to involve NCOR1, TBL1, HDAC1 and HDAC3. May be involved together with PAX3, SIX1, and EYA2 in regulation of myogenesis. In the developing somite, expression of DACH2 and PAX3 is regulated by the overlying ectoderm, and DACH2 and PAX3 positively regulate each other's expression. Probably binds to DNA via its DACHbox-N domain. In Mus musculus (Mouse), this protein is Dachshund homolog 2 (Dach2).